The primary structure comprises 1045 residues: Probable beta-glucosidase E (1045 aa).

Residues 1–74 are disordered; it reads MAPPDSTHGG…SGSYQLRPVD (74 aa). The Cytoplasmic portion of the chain corresponds to 1 to 163; sequence MAPPDSTHGG…PVKYARIWWR (163 aa). The segment covering 11-20 has biased composition (basic and acidic residues); the sequence is SFRDHLKTND. Residues 164-184 traverse the membrane as a helical; Signal-anchor for type II membrane protein segment; it reads TLLAVIVTLAVVVWGFLSFAV. Over 185 to 1045 the chain is Extracellular; the sequence is SHREEPKVWP…SRDLPLMGEY (861 aa). Residues asparagine 226, asparagine 234, and asparagine 402 are each glycosylated (N-linked (GlcNAc...) asparagine). Aspartate 430 is a catalytic residue. Asparagine 473, asparagine 512, asparagine 577, asparagine 893, asparagine 902, and asparagine 988 each carry an N-linked (GlcNAc...) asparagine glycan.

Belongs to the glycosyl hydrolase 3 family.

It is found in the cell membrane. The enzyme catalyses Hydrolysis of terminal, non-reducing beta-D-glucosyl residues with release of beta-D-glucose.. Its pathway is glycan metabolism; cellulose degradation. In terms of biological role, beta-glucosidases are one of a number of cellulolytic enzymes involved in the degradation of cellulosic biomass. Catalyzes the last step releasing glucose from the inhibitory cellobiose. The sequence is that of Probable beta-glucosidase E (bglE) from Neosartorya fischeri (strain ATCC 1020 / DSM 3700 / CBS 544.65 / FGSC A1164 / JCM 1740 / NRRL 181 / WB 181) (Aspergillus fischerianus).